The sequence spans 155 residues: MGVSPVRDSWLVDEASDELISSERKLIAVECHDDDSQVINVKVEDICKDLSDKVVLKLQFRLCYKYRKLLDITLLGCRMKVYTQLKNTSLNSLKSLLQKRMNNICNDNYAIGIRMFFVNINQFIKSCKWIVSTEDVYPICTLYHMRDSDVFNVIK.

This sequence belongs to the nanovirus U1 protein family.

The protein is Protein U1 (DNA-U1) of Cicer arietinum (Chickpea).